The sequence spans 131 residues: Small ribosomal subunit protein uS11 (131 aa).

This sequence belongs to the universal ribosomal protein uS11 family. Part of the 30S ribosomal subunit. Interacts with proteins S7 and S18. Binds to IF-3.

Its function is as follows. Located on the platform of the 30S subunit, it bridges several disparate RNA helices of the 16S rRNA. Forms part of the Shine-Dalgarno cleft in the 70S ribosome. The sequence is that of Small ribosomal subunit protein uS11 from Trichodesmium erythraeum (strain IMS101).